Here is a 270-residue protein sequence, read N- to C-terminus: Putative tRNA (cytidine(32)/guanosine(34)-2'-O)-methyltransferase (270 aa).

Residues glycine 53, tryptophan 55, aspartate 78, aspartate 94, and aspartate 119 each contribute to the S-adenosyl-L-methionine site. The active-site Proton acceptor is lysine 159.

This sequence belongs to the class I-like SAM-binding methyltransferase superfamily. RNA methyltransferase RlmE family. TRM7 subfamily.

It is found in the cytoplasm. It carries out the reaction cytidine(32)/guanosine(34) in tRNA + 2 S-adenosyl-L-methionine = 2'-O-methylcytidine(32)/2'-O-methylguanosine(34) in tRNA + 2 S-adenosyl-L-homocysteine + 2 H(+). Methylates the 2'-O-ribose of nucleotides at positions 32 and 34 of the tRNA anticodon loop of substrate tRNAs. The polypeptide is Putative tRNA (cytidine(32)/guanosine(34)-2'-O)-methyltransferase (fsjA) (Dictyostelium discoideum (Social amoeba)).